The sequence spans 103 residues: Non-histone chromosomal protein 6 (103 aa).

Disordered stretches follow at residues 1-30 (MPKAAAKSKTTGKVEKRRAKKDPNAPKRGL) and 70-103 (KQRAPYEAKAAADKKRYEDEKQAYNAEADEEESS). The segment at residues 26 to 94 (PKRGLSAYMF…RYEDEKQAYN (69 aa)) is a DNA-binding region (HMG box). Residues 70 to 91 (KQRAPYEAKAAADKKRYEDEKQ) are compositionally biased toward basic and acidic residues.

The protein belongs to the NHP6 family. Weakly associates with the stable heterodimer of ctc-1/pob3 and ctc-2/spt16 to form the FACT complex.

It is found in the nucleus. The protein resides in the chromosome. In terms of biological role, DNA-binding protein that induces severe bending of DNA. Required for DNA-binding by the FACT complex, a general chromatin factor that acts to reorganize nucleosomes. The FACT complex is involved in multiple processes that require DNA as a template such as mRNA elongation, DNA replication and DNA repair. Also augments the fidelity of transcription by RNA polymerase III independently of any role in the FACT complex. This chain is Non-histone chromosomal protein 6 (nhp-1), found in Neurospora crassa (strain ATCC 24698 / 74-OR23-1A / CBS 708.71 / DSM 1257 / FGSC 987).